Here is a 126-residue protein sequence, read N- to C-terminus: Protein LLP homolog (126 aa).

Over residues 1-21 (MAKSLRSKWRRKMRAEKRKKV) the composition is skewed to basic residues. 2 disordered regions span residues 1–22 (MAKS…KKVA) and 53–126 (VPPE…RLAW). Positions 73–94 (DGGKMDLDTKRNKKTMLDEHGR) are enriched in basic and acidic residues. The segment covering 103–126 (QAKKLKAKRVGKNGKPKPKKRLAW) has biased composition (basic residues).

It belongs to the learning-associated protein family.

It is found in the nucleus. Its subcellular location is the nucleolus. The protein resides in the chromosome. Regulates dendritic and spine growth and synaptic transmission. This Danio rerio (Zebrafish) protein is Protein LLP homolog (llph).